The primary structure comprises 1121 residues: Pleckstrin homology domain-containing family A member 7 (1121 aa).

2 WW domains span residues 9 to 42 (DTLPEHWSYGVCRDGRVFFINDQLRCTTWLHPRT) and 54 to 87 (SDLPRGWEEGFTEEGASYFIDHNQQTTAFRHPVT). The tract at residues 105–137 (PHMSKQDRNQRPSSMVSETSTAGTASTLEAKPG) is disordered. Polar residues predominate over residues 115–131 (RPSSMVSETSTAGTAST). The PH domain maps to 164 to 282 (PVVVRGWLHK…WVRAMNQAAQ (119 aa)). Residues 299-514 (QAVPQANHTE…LKMSSEERRA (216 aa)) are disordered. Basic and acidic residues-rich tracts occupy residues 308 to 356 (ESCH…EGKR) and 437 to 446 (HWARAQKGDS). Over residues 460-475 (PGQSLSFPENYQTLPK) the composition is skewed to polar residues. The segment covering 497-514 (YAQDRASHLKMSSEERRA) has biased composition (basic and acidic residues). 6 positions are modified to phosphoserine: Ser-536, Ser-545, Ser-569, Ser-604, Ser-608, and Ser-612. An interaction with CTNND1 region spans residues 538–696 (TAPICLGSPE…AESDTDVKLS (159 aa)). Residues 547–632 (EFTDQGRSRS…NSSHVDRRSM (86 aa)) are disordered. Positions 567–582 (PPSPSDIPPPGPPRVF) are enriched in pro residues. The span at 589 to 605 (TPAERVTVKPPDQRRSV) shows a compositional bias: basic and acidic residues. The stretch at 700-801 (EQDRVLQDLE…LQEQHRRAFF (102 aa)) forms a coiled coil. 2 disordered regions span residues 841–876 (RKTVPLFPHPPVPSLSTSESKPPPQPSPPTSPVRTP) and 888–971 (YVPY…ELGQ). Ser-858, Ser-860, and Ser-867 each carry phosphoserine. Positions 861–871 (KPPPQPSPPTS) are enriched in pro residues. At Thr-870 the chain carries Phosphothreonine. Phosphoserine is present on residues Ser-871, Ser-903, and Ser-907. The span at 933–942 (DQPPAVPPLP) shows a compositional bias: pro residues. A compositionally biased stretch (basic and acidic residues) spans 958–969 (RQSDERKRDREL). Ser-986 is subject to Phosphoserine. Disordered regions lie at residues 1003–1028 (GLVGPESRYQTLPGRGLSGSTSRLQQ) and 1082–1121 (RHQKALVRERKRTLGQGERTGLPSSRYLSRPLPGDLGSVC). A coiled-coil region spans residues 1067 to 1094 (QRGKMSAEEQLERMKRHQKALVRERKRT). The span at 1082 to 1094 (RHQKALVRERKRT) shows a compositional bias: basic residues.

Interacts with CAMSAP3 and CTNND1. Interacts (via WW domains) with TSPAN33 (via cytoplasmic domain) and with PDZD11; the interaction with TSPAN33 is dependent on PDZD11 being bound to PLEKHA7 and facilitates the docking of ADAM10 to zonula adherens through interaction of TSPAN33 with ADAM10.

It is found in the cell junction. Its subcellular location is the adherens junction. It localises to the cytoplasm. The protein localises to the cytoskeleton. The protein resides in the microtubule organizing center. It is found in the centrosome. Required for zonula adherens biogenesis and maintenance. Acts via its interaction with CAMSAP3, which anchors microtubules at their minus-ends to zonula adherens, leading to the recruitment of KIFC3 kinesin to the junctional site. Mediates docking of ADAM10 to zonula adherens through a PDZD11-dependent interaction with the ADAM10-binding protein TSPAN33. In Homo sapiens (Human), this protein is Pleckstrin homology domain-containing family A member 7 (PLEKHA7).